The chain runs to 153 residues: Putative WASP homolog-associated protein with actin, membranes and microtubules-like protein 1 (153 aa).

A coiled-coil region spans residues 113–151 (AIQFYEIQLELYEVKFEILKNKEILLTTQLDSLERLIKD).

The polypeptide is Putative WASP homolog-associated protein with actin, membranes and microtubules-like protein 1 (WHAMMP3) (Homo sapiens (Human)).